A 205-amino-acid polypeptide reads, in one-letter code: Small ribosomal subunit protein uS4 (205 aa).

The disordered stretch occupies residues 14–49 (RMGENIWGRPKSPVNRREYGPGQHGQRRKGKMSDFG). The S4 RNA-binding domain occupies 94-157 (SRLDAIVYRA…KQLVTVLEAV (64 aa)).

Belongs to the universal ribosomal protein uS4 family. As to quaternary structure, part of the 30S ribosomal subunit. Contacts protein S5. The interaction surface between S4 and S5 is involved in control of translational fidelity.

Its function is as follows. One of the primary rRNA binding proteins, it binds directly to 16S rRNA where it nucleates assembly of the body of the 30S subunit. With S5 and S12 plays an important role in translational accuracy. In Agrobacterium fabrum (strain C58 / ATCC 33970) (Agrobacterium tumefaciens (strain C58)), this protein is Small ribosomal subunit protein uS4.